The primary structure comprises 89 residues: Small ribosomal subunit protein uS14 (89 aa).

The protein belongs to the universal ribosomal protein uS14 family. Part of the 30S ribosomal subunit. Contacts proteins S3 and S10.

In terms of biological role, binds 16S rRNA, required for the assembly of 30S particles and may also be responsible for determining the conformation of the 16S rRNA at the A site. This Acholeplasma laidlawii (strain PG-8A) protein is Small ribosomal subunit protein uS14.